The sequence spans 149 residues: Arginine repressor (149 aa).

Belongs to the ArgR family.

It localises to the cytoplasm. The protein operates within amino-acid biosynthesis; L-arginine biosynthesis [regulation]. Functionally, regulates arginine biosynthesis genes. This Bacillus velezensis (strain DSM 23117 / BGSC 10A6 / LMG 26770 / FZB42) (Bacillus amyloliquefaciens subsp. plantarum) protein is Arginine repressor.